The sequence spans 61 residues: Small ribosomal subunit protein uS14 (61 aa).

Zn(2+) contacts are provided by C24, C27, C40, and C43.

This sequence belongs to the universal ribosomal protein uS14 family. Zinc-binding uS14 subfamily. Part of the 30S ribosomal subunit. Contacts proteins S3 and S10. It depends on Zn(2+) as a cofactor.

Binds 16S rRNA, required for the assembly of 30S particles and may also be responsible for determining the conformation of the 16S rRNA at the A site. This chain is Small ribosomal subunit protein uS14, found in Nitratiruptor sp. (strain SB155-2).